The sequence spans 500 residues: Lysine--tRNA ligase (500 aa).

Residues Glu410 and Glu417 each contribute to the Mg(2+) site.

It belongs to the class-II aminoacyl-tRNA synthetase family. As to quaternary structure, homodimer. Mg(2+) serves as cofactor.

Its subcellular location is the cytoplasm. It carries out the reaction tRNA(Lys) + L-lysine + ATP = L-lysyl-tRNA(Lys) + AMP + diphosphate. This Pseudomonas savastanoi pv. phaseolicola (strain 1448A / Race 6) (Pseudomonas syringae pv. phaseolicola (strain 1448A / Race 6)) protein is Lysine--tRNA ligase.